The primary structure comprises 188 residues: Elongation factor P (188 aa).

It belongs to the elongation factor P family.

The protein resides in the cytoplasm. Its pathway is protein biosynthesis; polypeptide chain elongation. Its function is as follows. Involved in peptide bond synthesis. Stimulates efficient translation and peptide-bond synthesis on native or reconstituted 70S ribosomes in vitro. Probably functions indirectly by altering the affinity of the ribosome for aminoacyl-tRNA, thus increasing their reactivity as acceptors for peptidyl transferase. In Phocaeicola vulgatus (strain ATCC 8482 / DSM 1447 / JCM 5826 / CCUG 4940 / NBRC 14291 / NCTC 11154) (Bacteroides vulgatus), this protein is Elongation factor P.